The primary structure comprises 277 residues: Methylglyoxal reductase DkgA (277 aa).

The active-site Proton donor is Tyr51. His107 provides a ligand contact to substrate. 187–241 (SPLAQGGKGVFDQEIIRKLAQQYNKTPAQIVIRWHLDSGLIVIPKSVTPARIREN) provides a ligand contact to NADP(+).

It belongs to the aldo/keto reductase family. As to quaternary structure, monomer.

Its subcellular location is the cytoplasm. It catalyses the reaction hydroxyacetone + NADP(+) = methylglyoxal + NADPH + H(+). Functionally, aldo-keto reductase that significantly contributes to cellular methylglyoxal detoxification by catalyzing the NADPH-dependent conversion of methylglyoxal to acetol. The protein is Methylglyoxal reductase DkgA of Yersinia pestis.